We begin with the raw amino-acid sequence, 197 residues long: Peptidyl-tRNA hydrolase (197 aa).

Y18 provides a ligand contact to tRNA. H23 serves as the catalytic Proton acceptor. TRNA-binding residues include F69, N71, and N117.

Belongs to the PTH family. As to quaternary structure, monomer.

It localises to the cytoplasm. It carries out the reaction an N-acyl-L-alpha-aminoacyl-tRNA + H2O = an N-acyl-L-amino acid + a tRNA + H(+). Its function is as follows. Hydrolyzes ribosome-free peptidyl-tRNAs (with 1 or more amino acids incorporated), which drop off the ribosome during protein synthesis, or as a result of ribosome stalling. Functionally, catalyzes the release of premature peptidyl moieties from peptidyl-tRNA molecules trapped in stalled 50S ribosomal subunits, and thus maintains levels of free tRNAs and 50S ribosomes. This chain is Peptidyl-tRNA hydrolase, found in Tolumonas auensis (strain DSM 9187 / NBRC 110442 / TA 4).